The primary structure comprises 410 residues: Elongation factor Tu, chloroplastic (410 aa).

Positions 10 to 214 constitute a tr-type G domain; that stretch reads KPHINIGTIG…QVDKYIPTPQ (205 aa). Residues 19-26 are G1; that stretch reads GHVDHGKT. A GTP-binding site is contributed by 19–26; it reads GHVDHGKT. Thr-26 contacts Mg(2+). Residues 60–64 are G2; that stretch reads GITIN. The tract at residues 81-84 is G3; the sequence is DCPG. GTP contacts are provided by residues 81–85 and 136–139; these read DCPGH and NKED. Positions 136–139 are G4; sequence NKED. The tract at residues 174–176 is G5; the sequence is SAL.

It belongs to the TRAFAC class translation factor GTPase superfamily. Classic translation factor GTPase family. EF-Tu/EF-1A subfamily.

It localises to the plastid. It is found in the chloroplast. The catalysed reaction is GTP + H2O = GDP + phosphate + H(+). Its function is as follows. GTP hydrolase that promotes the GTP-dependent binding of aminoacyl-tRNA to the A-site of ribosomes during protein biosynthesis. The sequence is that of Elongation factor Tu, chloroplastic (tufA) from Mesostigma viride (Green alga).